The following is a 1369-amino-acid chain: Mediator of RNA polymerase II transcription subunit 23 (1369 aa).

The segment at 1337-1369 (TESAAPPPPPMNSGSPAPQPNQVPVSVPLTVTQ) is disordered. The segment covering 1341 to 1357 (APPPPPMNSGSPAPQPN) has biased composition (pro residues).

This sequence belongs to the Mediator complex subunit 23 family. As to quaternary structure, component of the Mediator complex.

The protein resides in the nucleus. Its function is as follows. Component of the Mediator complex, a coactivator involved in the regulated transcription of nearly all RNA polymerase II-dependent genes. Mediator functions as a bridge to convey information from gene-specific regulatory proteins to the basal RNA polymerase II transcription machinery. Mediator is recruited to promoters by direct interactions with regulatory proteins and serves as a scaffold for the assembly of a functional preinitiation complex with RNA polymerase II and the general transcription factors. The protein is Mediator of RNA polymerase II transcription subunit 23 (med23) of Xenopus laevis (African clawed frog).